An 865-amino-acid polypeptide reads, in one-letter code: Valine--tRNA ligase (865 aa).

The 'HIGH' region signature appears at 43-53 (PNITGRIHMGH). Residues 523–527 (KMSKS) carry the 'KMSKS' region motif. K526 contributes to the ATP binding site. Residues 797-865 (GLIDFEKEKE…RLESILRDLE (69 aa)) are a coiled coil.

It belongs to the class-I aminoacyl-tRNA synthetase family. ValS type 1 subfamily. Monomer.

The protein localises to the cytoplasm. It catalyses the reaction tRNA(Val) + L-valine + ATP = L-valyl-tRNA(Val) + AMP + diphosphate. Its function is as follows. Catalyzes the attachment of valine to tRNA(Val). As ValRS can inadvertently accommodate and process structurally similar amino acids such as threonine, to avoid such errors, it has a 'posttransfer' editing activity that hydrolyzes mischarged Thr-tRNA(Val) in a tRNA-dependent manner. The polypeptide is Valine--tRNA ligase (Thermotoga maritima (strain ATCC 43589 / DSM 3109 / JCM 10099 / NBRC 100826 / MSB8)).